Here is a 170-residue protein sequence, read N- to C-terminus: Extracellular globin-3 (170 aa).

The signal sequence occupies residues 1–17; sequence MLRQLLVLVGLAVVCLA. The Globin domain occupies 23–169; it reads CCSEEDHRIV…ILTKISSRLN (147 aa). Cys24 and Cys156 are oxidised to a cystine. Position 119 (His119) interacts with heme b.

The protein belongs to the globin family. The extracellular hemoglobin of the earthworm consists of 12 subunits that have a hexagonal bilayer structure with a molecular weight near 3.8 million. Each one-twelfth subunit is composed primarily of disulfide linked trimers (chains A, B, and C) and monomers (chain D).

It is found in the secreted. This chain is Extracellular globin-3, found in Lumbricus terrestris (Common earthworm).